A 193-amino-acid polypeptide reads, in one-letter code: Cysteine and glycine-rich protein 2 (193 aa).

Residues 10 to 61 (CGACGRTVYHAEEVQCDGRTFHRCCFLCMVCRKNLDSTTVAIHDEEIYCKSC) enclose the LIM zinc-binding 1 domain. The short motif at 64 to 69 (KKYGPK) is the Nuclear localization signal element. Lys91 participates in a covalent cross-link: Glycyl lysine isopeptide (Lys-Gly) (interchain with G-Cter in SUMO2). N6-acetyllysine is present on residues Lys112 and Lys131. The region spanning 119–170 (CSRCGDSVYAAEKIIGAGKPWHKNCFRCAKCGKSLESTTLTEKEGEIYCKGC) is the LIM zinc-binding 2 domain. Lys137 is modified (N6-acetyllysine; alternate). Lys137 carries the N6-succinyllysine; alternate modification. Position 161 is an N6-acetyllysine (Lys161).

In terms of assembly, interacts with KAT14. The LIM domain 1 is necessary and sufficient for this interaction. Interacts with GLRX3. As to expression, highly expressed in the aorta; weakly found in the kidney, thymus, and intestine. Barely detectable in brain, testis, esophagus, lung, liver, aortic adventitia, vena cava, or uterus; not present in heart and skeletal muscle.

The protein localises to the nucleus. Drastically down-regulated in response to PDGF-BB or cell injury, that promote smooth muscle cell proliferation and dedifferentiation. Seems to play a role in the development of the embryonic vascular system. The polypeptide is Cysteine and glycine-rich protein 2 (Csrp2) (Rattus norvegicus (Rat)).